Consider the following 191-residue polypeptide: dTTP/UTP pyrophosphatase (191 aa).

Asp-71 serves as the catalytic Proton acceptor.

The protein belongs to the Maf family. YhdE subfamily. It depends on a divalent metal cation as a cofactor.

It localises to the cytoplasm. It catalyses the reaction dTTP + H2O = dTMP + diphosphate + H(+). It carries out the reaction UTP + H2O = UMP + diphosphate + H(+). Nucleoside triphosphate pyrophosphatase that hydrolyzes dTTP and UTP. May have a dual role in cell division arrest and in preventing the incorporation of modified nucleotides into cellular nucleic acids. The chain is dTTP/UTP pyrophosphatase from Hyphomonas neptunium (strain ATCC 15444).